The primary structure comprises 371 residues: MNNTEFYDRLGVSKDASQDEIKKAYRRMSKKYHPDINKEAGAEEKYKEVQEAYETLSDTQKRAAYDQYGAAGANGGFGGFDGGGFGGFEDIFSSFFGGGGMRNPNAPRQGDDLQYRVNLSFEEAIFGAEKEVSYNRESSCHTCSGSGAKPGTSPVTCQKCHGSGVINVDTQTPLGTMRRQVTCDVCQGSGQEIKEKCPTCHGTGHEKKTHKVSVKIPAGVETGQQIRLTGQGEAGFNGGPYGDLFVIINVLPSQQFERNGSTIYYTLNISFVQAALGDTIDIPTVHGAVEMSIPAGTQTGKTFRLRGKGAPKLRGGGQGDQHVTVNIVTPTKLNDAQKEALHAFAEASGDKMVHPKKKGFFDKVKDALDVD.

A J domain is found at 5 to 69; that stretch reads EFYDRLGVSK…QKRAAYDQYG (65 aa). Residues 127–209 form a CR-type zinc finger; it reads GAEKEVSYNR…CHGTGHEKKT (83 aa). The Zn(2+) site is built by Cys140, Cys143, Cys157, Cys160, Cys183, Cys186, Cys197, and Cys200. CXXCXGXG motif repeat units lie at residues 140–147, 157–164, 183–190, and 197–204; these read CHTCSGSG, CQKCHGSG, CDVCQGSG, and CPTCHGTG.

Belongs to the DnaJ family. As to quaternary structure, homodimer. Zn(2+) serves as cofactor.

It localises to the cytoplasm. Functionally, participates actively in the response to hyperosmotic and heat shock by preventing the aggregation of stress-denatured proteins and by disaggregating proteins, also in an autonomous, DnaK-independent fashion. Unfolded proteins bind initially to DnaJ; upon interaction with the DnaJ-bound protein, DnaK hydrolyzes its bound ATP, resulting in the formation of a stable complex. GrpE releases ADP from DnaK; ATP binding to DnaK triggers the release of the substrate protein, thus completing the reaction cycle. Several rounds of ATP-dependent interactions between DnaJ, DnaK and GrpE are required for fully efficient folding. Also involved, together with DnaK and GrpE, in the DNA replication of plasmids through activation of initiation proteins. The sequence is that of Chaperone protein DnaJ from Streptococcus agalactiae serotype Ia (strain ATCC 27591 / A909 / CDC SS700).